We begin with the raw amino-acid sequence, 254 residues long: SKA complex subunit 1 (254 aa).

The stretch at 49–90 (NELLNKLELEIQYQEQTNSSLKELFESLEEDYKDVEHLKENI) forms a coiled coil. A flexiple loop that anchors MAPRE1 region spans residues 91–131 (PPHLPQVTVTQNFVNGSDLDPEEPVKVEEPAPTKKPPKEQR). Residues 92 to 95 (PHLP) carry the Slightly degenerated SXLP motif; may mediate interaction with MAPRE1, targeting to microtubule plus ends, stabilization on kinetochores and is required for proper chromosome alignment to the metaphase plate motif. A disordered region spans residues 105–131 (NGSDLDPEEPVKVEEPAPTKKPPKEQR). Positions 113–131 (EPVKVEEPAPTKKPPKEQR) are enriched in basic and acidic residues. The segment at 131-254 (RSIKEMPFIT…GKGLTRYVIT (124 aa)) is binds microtubules and protein phosphatase PP1 subunit PPP1CA. Residue T156 is modified to Phosphothreonine. S241 carries the post-translational modification Phosphoserine.

Belongs to the SKA1 family. Component of the SKA complex, composed of SKA1, SKA2 and SKA3. The SKA complex is a homodimer organized around a central W-shaped coiled-coil structure, formed by the interacting domains of SKA1, SKA2, and SKA3, each end of the 'W' is extended further by the C-terminal microtubule-binding domains of SKA1 and SKA3; the complex forms extended structures on microtubules. Interacts (via SXLP motif) with MAPRE1 (via C-terminus); the interaction is direct and stabilizes the kinetochore-microtubule attachment of the SKA1 complex. Interacts (via C-terminus) with protein phosphatase PP1 subunit PPP1CA; the interaction is direct and required for recruitment of PPP1CA to the kinetochore. Interacts with the NDC80 complex; the interaction is required to establish kinetochore-microtubule end-on attachments.

The protein localises to the cytoplasm. It localises to the cytoskeleton. The protein resides in the spindle. Its subcellular location is the chromosome. It is found in the centromere. The protein localises to the kinetochore. It localises to the microtubule organizing center. The protein resides in the centrosome. In terms of biological role, component of the SKA complex, a microtubule plus end-binding complex of the outer kinetochore that stabilizes spindle microtubule-kinetochore attachments, promotes alignment of chromosomes at the mitotic spindle equator (chromosome congression) and assists suppression of the spindle assembly checkpoint. Kinetochores, consisting of a centromere-associated inner segment and a microtubule-contacting outer segment, play a crucial role in chromosome segregation by mediating the physical connection between centromeric DNA and spindle microtubules. The outer kinetochore is made up of the ten-subunit KMN network complex, comprising the MIS12, NDC80 and KNL1 complexes, and auxiliary microtubule-associated components such as the SKA complex; together they connect the outer kinetochore with the inner kinetochore, bind microtubules, and mediate interactions with mitotic checkpoint proteins that delay anaphase until chromosomes are bioriented on the spindle. The SKA complex is loaded onto bioriented kinetochores and it facilitates chromosome congression by stabilizing microtubules together with MAPRE1, and end-on attachment of the NDC80 complex to depolymerizing spindle microtubules, thereby assisting the poleward-moving kinetochore in withstanding microtubule pulling forces. The complex associates with dynamic microtubule plus-ends and can track both depolymerizing and elongating microtubules. The complex recruits protein phosphatase 1 (PP1) to the kinetochore in prometaphase and metaphase, to oppose spindle assembly checkpoint signaling and promote the onset of anaphase. In the complex, it mediates interactions with microtubules. It also stimulates AURKB/Aurora B catalytic activity. During meiosis the SKA complex stabilizes the meiotic spindle and is required for its migration to the cortex. This chain is SKA complex subunit 1 (SKA1), found in Bos taurus (Bovine).